The sequence spans 245 residues: Purine nucleoside phosphorylase (245 aa).

Residue H8 participates in a purine D-ribonucleoside binding. Residues 24 to 28 (GDPGR), R46, and 89 to 92 (RAGS) each bind phosphate. 184–185 (ME) contributes to the a purine D-ribonucleoside binding site. Residue D207 is the Proton donor of the active site.

The protein belongs to the PNP/MTAP phosphorylase family. As to quaternary structure, homohexamer; trimer of homodimers.

The enzyme catalyses inosine + phosphate = alpha-D-ribose 1-phosphate + hypoxanthine. It carries out the reaction guanosine + phosphate = alpha-D-ribose 1-phosphate + guanine. It catalyses the reaction 2'-deoxyguanosine + phosphate = 2-deoxy-alpha-D-ribose 1-phosphate + guanine. The catalysed reaction is 2'-deoxyinosine + phosphate = 2-deoxy-alpha-D-ribose 1-phosphate + hypoxanthine. It functions in the pathway purine metabolism; purine nucleoside salvage. Its function is as follows. As part of the purine salvage pathway, catalyzes the phosphorolytic breakdown of the N-glycosidic bond in the beta-(deoxy)ribonucleoside molecules, with the formation of the corresponding free purine bases and pentose-1-phosphate. Preferentially acts on inosine and guanosine, and to a lesser extent on 2'-deoxyinosine and 2'-deoxyguanosine. The polypeptide is Purine nucleoside phosphorylase (Plasmodium vivax (strain Salvador I)).